Here is a 410-residue protein sequence, read N- to C-terminus: Elongation factor Tu, chloroplastic (410 aa).

Positions 10–214 constitute a tr-type G domain; sequence KPHINIGTIG…QVDKYIPTPQ (205 aa). The segment at 19–26 is G1; it reads GHVDHGKT. GTP is bound at residue 19 to 26; sequence GHVDHGKT. Thr-26 lines the Mg(2+) pocket. Residues 60-64 are G2; the sequence is GITIN. The segment at 81-84 is G3; that stretch reads DCPG. Residues 81–85 and 136–139 each bind GTP; these read DCPGH and NKED. A G4 region spans residues 136–139; the sequence is NKED. The interval 174 to 176 is G5; that stretch reads SAL.

It belongs to the TRAFAC class translation factor GTPase superfamily. Classic translation factor GTPase family. EF-Tu/EF-1A subfamily.

It is found in the plastid. The protein resides in the chloroplast. It catalyses the reaction GTP + H2O = GDP + phosphate + H(+). Its function is as follows. GTP hydrolase that promotes the GTP-dependent binding of aminoacyl-tRNA to the A-site of ribosomes during protein biosynthesis. In Mesostigma viride (Green alga), this protein is Elongation factor Tu, chloroplastic (tufA).